The primary structure comprises 639 residues: Chaperone protein HtpG (639 aa).

The tract at residues 1 to 347 is a; substrate-binding; that stretch reads MSHQETHGFQ…SNDLPLNVSR (347 aa). The segment at 348 to 564 is b; that stretch reads EILQDNKITT…AGEMSSQMIK (217 aa). Positions 565–639 are c; sequence LMQAAGQAVT…MNKMLLASVK (75 aa).

The protein belongs to the heat shock protein 90 family. As to quaternary structure, homodimer.

Its subcellular location is the cytoplasm. Its function is as follows. Molecular chaperone. Has ATPase activity. The sequence is that of Chaperone protein HtpG from Shewanella loihica (strain ATCC BAA-1088 / PV-4).